The following is a 428-amino-acid chain: MTAAKPNPYAAKPGDYLSNVNNFQLIDSTLREGEQFANAFFDTEKKIEIARALDDFGVDYIELTSPVASEQSRKDCEAICKLGLKAKILTHIRCHMDDAKVAVETGVDGVDVVIGTSKFLRQYSHGKDMNYIAKSAVEVIEFVKSKGIEIRFSSEDSFRSDLVDLLNIYKTVDKIGVNRVGIADTVGCANPRQVYELIRTLKSVVSCDIECHFHNDTGCAIANAYTALEGGARLIDVSVLGIGERNGITPLGGLMARMIVAAPDYVKSKYKLHKIRDIENLVADAVEVNIPFNNPITGFCAFTHKAGIHAKAILANPSTYEILDPHDFGMKRYIHFANRLTGWNAIKARVDQLNLNLTDDQIKEVTAKIKKLGDVRSLNIDDVDSIIKNFHAEVSTPQVLSAKKNKKNDSDVPELATIPAAKRTKPSA.

In terms of domain architecture, Pyruvate carboxyltransferase spans 23–276 (FQLIDSTLRE…KSKYKLHKIR (254 aa)). Position 31 (arginine 31) interacts with 2-oxoglutarate. Glutamate 32 provides a ligand contact to Mg(2+). Residues histidine 91, arginine 151, and threonine 185 each coordinate 2-oxoglutarate. The Mg(2+) site is built by histidine 212 and histidine 214. The Proton acceptor role is filled by histidine 309. Serine 385 carries the phosphoserine modification. Position 396 is a phosphothreonine (threonine 396). The tract at residues 399 to 428 (VLSAKKNKKNDSDVPELATIPAAKRTKPSA) is disordered. Phosphoserine occurs at positions 401 and 410.

The protein belongs to the alpha-IPM synthase/homocitrate synthase family. Homocitrate synthase LYS20/LYS21 subfamily. Mg(2+) serves as cofactor. It depends on Mn(2+) as a cofactor.

The protein localises to the cytoplasm. The catalysed reaction is acetyl-CoA + 2-oxoglutarate + H2O = (2R)-homocitrate + CoA + H(+). Its pathway is amino-acid biosynthesis; L-lysine biosynthesis via AAA pathway; L-alpha-aminoadipate from 2-oxoglutarate: step 1/5. Catalyzes the aldol-type condensation of 2-oxoglutarate with acetyl-CoA to yield homocitrate. Carries out the first step of the alpha-aminoadipate (AAA) lysine biosynthesis pathway. The chain is Homocitrate synthase, cytosolic isozyme (LYS20) from Saccharomyces cerevisiae (strain ATCC 204508 / S288c) (Baker's yeast).